The primary structure comprises 592 residues: Syntaxin-binding protein 3 (592 aa).

The interval 1–255 is mediates interaction with DOC2B; that stretch reads MAPPVAERGL…STVLHELTFQ (255 aa).

Belongs to the STXBP/unc-18/SEC1 family. Interacts with DOC2B; the interaction is direct, occurs at the cell membrane, excludes interaction with STX4 and regulates glucose-stimulated insulin secretion. Interacts with STX4. Phosphorylated by PKC in platelets in response to thrombin stimulation; phosphorylation inhibits binding to STX4. As to expression, megakaryocytes and platelets.

The protein resides in the cytoplasm. Its subcellular location is the cytosol. It localises to the cell membrane. In terms of biological role, together with STX4 and VAMP2, may play a role in insulin-dependent movement of GLUT4 and in docking/fusion of intracellular GLUT4-containing vesicles with the cell surface in adipocytes. This Homo sapiens (Human) protein is Syntaxin-binding protein 3 (STXBP3).